The following is a 140-amino-acid chain: uncharacterized protein (140 aa).

Residues 1–19 (MGLCGSKTQPMPSQTTTVA) are compositionally biased toward polar residues. The segment at 1–140 (MGLCGSKTQP…ERERENMIYD (140 aa)) is disordered. G2 carries N-myristoyl glycine lipidation. The S-palmitoyl cysteine moiety is linked to residue C4. Positions 27 to 40 (INRDTVKSKQELRH) are enriched in basic and acidic residues. Basic residues predominate over residues 41 to 51 (KEKKDKKKKTQ). Residues 73-140 (DPSKNKVSPK…ERERENMIYD (68 aa)) are compositionally biased toward basic and acidic residues.

It to S.pombe new13. Post-translationally, myristoylated. The N-myristoylated protein is further palmitoylated by ERF2, PFA4 and slightly by PFA5, but not by PFA3.

The protein localises to the cytoplasm. It is found in the cytosol. This is an uncharacterized protein from Saccharomyces cerevisiae (strain ATCC 204508 / S288c) (Baker's yeast).